The chain runs to 22 residues: Recombination and repair protein (22 aa).

This sequence belongs to the RecA family.

Functionally, important in genetic recombination, DNA repair, and replication. Possesses pairing and strand-transfer activity. Interacts with dda and gene 32 proteins. The chain is Recombination and repair protein (UVSX) from Escherichia coli (Bacteriophage T2).